The chain runs to 505 residues: Histidine ammonia-lyase (505 aa).

Positions 141-143 form a cross-link, 5-imidazolinone (Ala-Gly); sequence ASG. 2,3-didehydroalanine (Ser) is present on Ser142.

It belongs to the PAL/histidase family. Contains an active site 4-methylidene-imidazol-5-one (MIO), which is formed autocatalytically by cyclization and dehydration of residues Ala-Ser-Gly.

It is found in the cytoplasm. The catalysed reaction is L-histidine = trans-urocanate + NH4(+). It functions in the pathway amino-acid degradation; L-histidine degradation into L-glutamate; N-formimidoyl-L-glutamate from L-histidine: step 1/3. The chain is Histidine ammonia-lyase from Bacillus cereus (strain ZK / E33L).